We begin with the raw amino-acid sequence, 195 residues long: Imidazoleglycerol-phosphate dehydratase (195 aa).

Belongs to the imidazoleglycerol-phosphate dehydratase family.

The protein resides in the cytoplasm. It catalyses the reaction D-erythro-1-(imidazol-4-yl)glycerol 3-phosphate = 3-(imidazol-4-yl)-2-oxopropyl phosphate + H2O. It functions in the pathway amino-acid biosynthesis; L-histidine biosynthesis; L-histidine from 5-phospho-alpha-D-ribose 1-diphosphate: step 6/9. This Paraburkholderia phytofirmans (strain DSM 17436 / LMG 22146 / PsJN) (Burkholderia phytofirmans) protein is Imidazoleglycerol-phosphate dehydratase.